We begin with the raw amino-acid sequence, 412 residues long: [Pyruvate dehydrogenase (acetyl-transferring)] kinase isozyme 4, mitochondrial (412 aa).

The Histidine kinase domain maps to 138–368 (ILEYKDNCTV…DAIIYLKALS (231 aa)). Residues 254 to 261 (ELFKNAMR), aspartate 293, 312 to 313 (ST), and 329 to 334 (GFGYGL) contribute to the ATP site.

The protein belongs to the PDK/BCKDK protein kinase family. In terms of assembly, homodimer. Interacts with the pyruvate dehydrogenase complex subunit DLAT, and is part of the multimeric pyruvate dehydrogenase complex that contains multiple copies of pyruvate dehydrogenase (E1), dihydrolipoamide acetyltransferase (DLAT, E2) and lipoamide dehydrogenase (DLD, E3). In terms of tissue distribution, ubiquitous; highest levels of expression in heart and skeletal muscle.

The protein localises to the mitochondrion matrix. It catalyses the reaction L-seryl-[pyruvate dehydrogenase E1 alpha subunit] + ATP = O-phospho-L-seryl-[pyruvate dehydrogenase E1 alpha subunit] + ADP + H(+). Kinase that plays a key role in regulation of glucose and fatty acid metabolism and homeostasis via phosphorylation of the pyruvate dehydrogenase subunits PDHA1 and PDHA2. This inhibits pyruvate dehydrogenase activity, and thereby regulates metabolite flux through the tricarboxylic acid cycle, down-regulates aerobic respiration and inhibits the formation of acetyl-coenzyme A from pyruvate. Inhibition of pyruvate dehydrogenase decreases glucose utilization and increases fat metabolism in response to prolonged fasting and starvation. Plays an important role in maintaining normal blood glucose levels under starvation, and is involved in the insulin signaling cascade. Via its regulation of pyruvate dehydrogenase activity, plays an important role in maintaining normal blood pH and in preventing the accumulation of ketone bodies under starvation. In the fed state, mediates cellular responses to glucose levels and to a high-fat diet. Regulates both fatty acid oxidation and de novo fatty acid biosynthesis. Plays a role in the generation of reactive oxygen species. Protects detached epithelial cells against anoikis. Plays a role in cell proliferation via its role in regulating carbohydrate and fatty acid metabolism. The chain is [Pyruvate dehydrogenase (acetyl-transferring)] kinase isozyme 4, mitochondrial (Pdk4) from Rattus norvegicus (Rat).